The primary structure comprises 267 residues: Putative carbamate hydrolase RutD (267 aa).

The region spanning 14–115 (PVMVMISGLG…SALVIINGWL (102 aa)) is the AB hydrolase-1 domain.

It belongs to the AB hydrolase superfamily. Hydrolase RutD family.

It carries out the reaction carbamate + 2 H(+) = NH4(+) + CO2. In terms of biological role, involved in pyrimidine catabolism. May facilitate the hydrolysis of carbamate, a reaction that can also occur spontaneously. This is Putative carbamate hydrolase RutD from Cronobacter turicensis (strain DSM 18703 / CCUG 55852 / LMG 23827 / z3032).